Here is a 175-residue protein sequence, read N- to C-terminus: 19.0 kDa class II heat shock protein (175 aa).

Positions 42–165 (DRRAMANTPM…KPRVVEVKVA (124 aa)) constitute a sHSP domain. The disordered stretch occupies residues 145–175 (TVDKKPPPEPKKPRVVEVKVAGAGEPKGKGK). The span at 146–161 (VDKKPPPEPKKPRVVE) shows a compositional bias: basic and acidic residues.

This sequence belongs to the small heat shock protein (HSP20) family. In terms of assembly, may form oligomeric structures.

It is found in the cytoplasm. The chain is 19.0 kDa class II heat shock protein (HSP19.0) from Oryza sativa subsp. japonica (Rice).